The sequence spans 476 residues: UDP-glucose 6-dehydrogenase (476 aa).

NAD(+) is bound by residues 7–12, aspartate 32, arginine 37, 85–89, 126–127, and glutamate 161; these read GAGYVG, VNTPT, and ST. Substrate-binding positions include 157 to 161, 216 to 220, arginine 256, and 263 to 269; these read EFLAE, KLAAN, and QASVGFG. The active-site Nucleophile is the cysteine 272. 272–275 is an NAD(+) binding site; that stretch reads CFQK. 334-335 lines the substrate pocket; sequence FK. NAD(+) is bound at residue arginine 342. Arginine 439 serves as a coordination point for substrate.

The protein belongs to the UDP-glucose/GDP-mannose dehydrogenase family.

It carries out the reaction UDP-alpha-D-glucose + 2 NAD(+) + H2O = UDP-alpha-D-glucuronate + 2 NADH + 3 H(+). It functions in the pathway nucleotide-sugar biosynthesis; UDP-alpha-D-glucuronate biosynthesis; UDP-alpha-D-glucuronate from UDP-alpha-D-glucose: step 1/1. Functionally, involved in the biosynthesis of glycosaminoglycans; hyaluronan, chondroitin sulfate and heparan sulfate. Required for wingless signaling in different tissues. The protein is UDP-glucose 6-dehydrogenase (sgl) of Drosophila melanogaster (Fruit fly).